A 429-amino-acid polypeptide reads, in one-letter code: UDP-N-acetylglucosamine 1-carboxyvinyltransferase (429 aa).

22-23 (KN) contacts phosphoenolpyruvate. R102 is a UDP-N-acetyl-alpha-D-glucosamine binding site. The Proton donor role is filled by C126. 2-(S-cysteinyl)pyruvic acid O-phosphothioketal is present on C126. UDP-N-acetyl-alpha-D-glucosamine contacts are provided by residues 131 to 135 (RPVDL), D316, and I338.

Belongs to the EPSP synthase family. MurA subfamily.

The protein resides in the cytoplasm. It carries out the reaction phosphoenolpyruvate + UDP-N-acetyl-alpha-D-glucosamine = UDP-N-acetyl-3-O-(1-carboxyvinyl)-alpha-D-glucosamine + phosphate. The protein operates within cell wall biogenesis; peptidoglycan biosynthesis. In terms of biological role, cell wall formation. Adds enolpyruvyl to UDP-N-acetylglucosamine. The protein is UDP-N-acetylglucosamine 1-carboxyvinyltransferase of Methylorubrum extorquens (strain CM4 / NCIMB 13688) (Methylobacterium extorquens).